The sequence spans 374 residues: MIFDEDSSSVAQESGYMGVGSPYSSDVGRISMSDHWNKLTKPSSIKVVNHGNALNKADLIIEPLESGFALTLGNALRRVMMSSLRGFAVYGVEIENVLHEFTSISGVREDVTDILLNISMIRLKLSGMDNKVLSLKVKGPCEVRSGMIADTPDCTILNKDLLICTLDQDVDFNIKMYVNSGKGYVPAVKRKSINKFGLNDVPVNFIATNALYSPIKKASFRVESSRIGQFTDYDRLIMSVETDHSILPDEAVALAARILQDQFQQFINFDETDEPHQKVDTKDVLPYDSNLLRKVDELELSVRSYNCLKNDNITYIGDLVQKTESDMLRTPNFGRKSLNEINELLASMNLHLGMKIANWPPESIESLSKQYSEE.

The tract at residues 1-270 is alpha N-terminal domain (alpha-NTD); it reads MIFDEDSSSV…DQFQQFINFD (270 aa). Residues 282 to 374 form an alpha C-terminal domain (alpha-CTD) region; the sequence is KDVLPYDSNL…ESLSKQYSEE (93 aa).

This sequence belongs to the RNA polymerase alpha chain family. In terms of assembly, homodimer. The RNAP catalytic core consists of 2 alpha, 1 beta, 1 beta' and 1 omega subunit. When a sigma factor is associated with the core the holoenzyme is formed, which can initiate transcription.

The enzyme catalyses RNA(n) + a ribonucleoside 5'-triphosphate = RNA(n+1) + diphosphate. Functionally, DNA-dependent RNA polymerase catalyzes the transcription of DNA into RNA using the four ribonucleoside triphosphates as substrates. The sequence is that of DNA-directed RNA polymerase subunit alpha from Ehrlichia ruminantium (strain Welgevonden).